Consider the following 157-residue polypeptide: Nucleoside deoxyribosyltransferase (157 aa).

The Nucleophile role is filled by glutamate 98.

The protein belongs to the nucleoside deoxyribosyltransferase family. Homohexamer.

It catalyses the reaction 2-deoxy-D-ribosyl-base(1) + base(2) = 2-deoxy-D-ribosyl-base(2) + base(1).. It participates in nucleotide metabolism; nucleotide salvage pathway. In terms of biological role, catalyzes the cleavage of the glycosidic bond of 2'-deoxyribonucleosides and the transfer of the deoxyribosyl moiety to an acceptor purine or pyrimidine base. This Lactobacillus leichmannii protein is Nucleoside deoxyribosyltransferase (ntd).